The sequence spans 242 residues: DnaJ homolog subfamily B member 6 (242 aa).

The J domain occupies 3 to 69 (EYYDVLGVQR…KKRDIYDKYG (67 aa)).

As to quaternary structure, homooligomer.

Its subcellular location is the cytoplasm. It is found in the perinuclear region. It localises to the nucleus. Has a stimulatory effect on the ATPase activity of HSP70 in a dose-dependent and time-dependent manner and hence acts as a co-chaperone of HSP70. Plays an indispensable role in the organization of KRT8/KRT18 filaments. Acts as an endogenous molecular chaperone for neuronal proteins including huntingtin. Suppresses aggregation and toxicity of polyglutamine-containing, aggregation-prone proteins. Also reduces cellular toxicity and caspase-3 activity. The polypeptide is DnaJ homolog subfamily B member 6 (Xenopus tropicalis (Western clawed frog)).